A 212-amino-acid chain; its full sequence is Entry-fusion complex associated protein OPG083 (212 aa).

Residues 1 to 175 are Virion surface-facing; sequence MAETKEFKTL…IIENRLPYYD (175 aa). 3 disulfides stabilise this stretch: Cys33–Cys55, Cys47–Cys127, and Cys107–Cys149. A helical membrane pass occupies residues 176–196; that stretch reads PWFLVGVAIILVIFTVAICSI. Residues 197 to 212 lie on the Intravirion side of the membrane; sequence RRNLALKYRYGTFLYV.

This sequence belongs to the orthopoxvirus OPG053 family. In terms of assembly, component of the entry fusion complex (EFC) composed of OPG053/F9, OPG076/O3, OPG086/G3, OPG094/G9, OPG095/L1, OPG099/L5, OPG107/H2, OPG143/A16, OPG104/J5, OPG147/A21 and OPG155/A28. Except for OPG095/L1 and OPG052/F9, each of the EFC proteins is required for assembly or stability of the complex. Post-translationally, disulfid bonds are oxidized in the cytoplasm by OPG088 protein. In terms of processing, unglycosylated because produced in viral factories instead of the classic ER -Golgi route.

It localises to the virion membrane. Component of the entry fusion complex (EFC), which consists of 11 proteins. During cell infection, this complex mediates entry of the virion core into the host cytoplasm by a two-step mechanism consisting of lipid mixing of the viral and cellular membranes and subsequent pore formation. This is Entry-fusion complex associated protein OPG083 (OPG053) from Vaccinia virus (strain Western Reserve) (VACV).